A 216-amino-acid polypeptide reads, in one-letter code: Redox-sensing transcriptional repressor Rex (216 aa).

The segment at residues Gln-20–Phe-59 is a DNA-binding region (H-T-H motif). Gly-94–Gly-99 contacts NAD(+).

This sequence belongs to the transcriptional regulatory Rex family. In terms of assembly, homodimer.

Its subcellular location is the cytoplasm. Its function is as follows. Modulates transcription in response to changes in cellular NADH/NAD(+) redox state. This chain is Redox-sensing transcriptional repressor Rex, found in Lactococcus lactis subsp. cremoris (Streptococcus cremoris).